Here is a 1396-residue protein sequence, read N- to C-terminus: MSGDSIHRRRMALHCPITSLILLLIAMSAHGYNIDLPSYVRFRQSSNSMFGFSIAMHKGRSGFYGNQNNVSLIVGAPKFDTSRYQQGVTEAGGVFKCSLNDDDCKLVPFDSKGNNRNVDKEVVDRKSYQWLGATVATGRDSDLVVACAPRYVFHTMTPSRAFRIDPVGTCFTSHNFEEFYEVSPCRTNNWGYHRQGSCQAGFSAAINGNGSRLFIGAPGSWYWQGQTYSIPPDAKFPFKPPLYQPFGTGGMASSHDVTRPENQVFSTSESASVNDDSYLGYSMVTGDFDGDRSEDVAIGMPRGGNLVGRIVVNRWNMANIFNITGRQIGEYFGYSLATSDVDGDGLDDLLIGAPMYTDPDNVEGKYDVGRVYILLQGGPTEEKRWTTEHIRDGYHSKGRFGLALTTLGDVNGDGYGDFAVGAPYDGPEGRGVVYIFHGSPMGPLAKPSQIIKSEQLVEGAPYPRTFGFALSGGLDMDGNTYPDLAVGAYSSDQVFIFKSRPVAAVNAETSFASNSKLISLDDRSCQLVRDHKKVPCMLLTTCWSYTGRYLPEQLDFDVSWLLDAKKLLNPRMFFLRDEGKNIRNQTIRLNYGQKYCLNETVYLLDKVQDKLTPLEVEARYNLRSSRPLDPMVRHRRSILEPVIDQNREIVLRDAINIQKNCGPDNICEPDLKLKVSTVDKYLFGSPEPLVIEVFISNTNEDAFEAAFYMVTPPDLQFRKLQQLGEKKDTPITCSPPTPENNHTLKCDIGNPLESGKIAHFKISLVPEEKYGSSSSYDFYWEANSTNLEKPGSEYDNKIRQSVGIWVDTDLDIKGTSLPDYQLYKADDYKELENATKEDDIGPQVVHIYEIRNNRPSIIEEAEVFIHLPYETIVGDPLMYLLNQPETGGKIQCDDVAFNEYNLLLDEKLVKKSYLQAQGAIWNSAQVSGQSSSSSSSGGASVHIEKARGEGFVRGVLVSNSTDAGDKLSPKQVEQRRQEDTLEALGDASFVHRDRASQAVQEPQVNQTSFTTYSTSSSSSGSGAPSAQLRGHSTQGHIQMAGPVQHTSSSSSSNYRSWPAQQQQQHQQLLLAGSGGSGLGSPVTFNDKSQFGGRNNNFHTGTLDLGTLNRGNVDNELYRSQGQYQNPSQSLGQSQGQFQANANQGHYQGQNQAQFQARNPGFQGQTSYQGQTQYSGQPGGYQTHHVTYSSGSKPYYGRENEDFYDEDNLQQATPGHWSSSSSSSSSSGTRRLRRSNDKDGATEKPLQIDLNSPCQSARCKSIRCVVTNLGTEDGDAAFVAIRARMVAKTMEKLASNVPLNVSTLAVANVTLLPFIGAPKDAIVKTHEIFYKAEPEPLQVPDVVPLWVVVLAACAGALIFLLLVWLLYKCGFFNRNRPTDHSQERQPLRNGYHGDEHL.

A signal peptide spans 1–31 (MSGDSIHRRRMALHCPITSLILLLIAMSAHG). Residues 32–1341 (YNIDLPSYVR…EPEPLQVPDV (1310 aa)) are Extracellular-facing. FG-GAP repeat units lie at residues 36 to 106 (LPSY…DCKL), 117 to 174 (NVDK…FTSH), 186 to 239 (RTNN…FPFK), 266 to 317 (STSE…RWNM), 318 to 383 (ANIF…TEEK), 386 to 445 (TTEH…GPLA), and 452 to 514 (KSEQ…FASN). Asn-69 carries N-linked (GlcNAc...) asparagine glycosylation. A glycan (N-linked (GlcNAc...) asparagine) is linked at Asn-209. A glycan (N-linked (GlcNAc...) asparagine) is linked at Asn-322. Asn-584, Asn-598, Asn-741, Asn-783, Asn-833, and Asn-959 each carry an N-linked (GlcNAc...) asparagine glycan. Disordered regions lie at residues 960–1107 (STDA…LGTL) and 1159–1246 (PGFQ…KPLQ). Basic and acidic residues predominate over residues 963-979 (AGDKLSPKQVEQRRQED). A compositionally biased stretch (polar residues) spans 997-1006 (QAVQEPQVNQ). Asn-1005 is a glycosylation site (N-linked (GlcNAc...) asparagine). 2 stretches are compositionally biased toward low complexity: residues 1007–1021 (TSFT…SSGS) and 1060–1071 (QQQQQHQQLLLA). Positions 1082 to 1099 (VTFNDKSQFGGRNNNFHT) are enriched in polar residues. Low complexity-rich tracts occupy residues 1162–1182 (QGQT…GYQT) and 1217–1226 (SSSSSSSSSS). 2 N-linked (GlcNAc...) asparagine glycosylation sites follow: Asn-1299 and Asn-1307. A helical transmembrane segment spans residues 1342-1366 (VPLWVVVLAACAGALIFLLLVWLLY). Over 1367-1396 (KCGFFNRNRPTDHSQERQPLRNGYHGDEHL) the chain is Cytoplasmic. Positions 1377–1396 (TDHSQERQPLRNGYHGDEHL) are disordered.

It belongs to the integrin alpha chain family. In terms of assembly, heterodimer of an alpha and a beta subunit. The alpha subunit is composed of a heavy and a light chain linked by a disulfide bond. Alpha-PS2 associates with beta-PS. In terms of processing, the heavy-light chain cleavage site is either in 1230-1231, or 1233-1234, or 1243-1244. In ovaries, highly expressed in follicle cells. At syncytial blastoderm stage, expressed in the embryonic mesodermal precursors but not in the ectoderm. At embryonic stages 7 and 10, expression is restricted to the mesoderm. At stage 12, expressed in the gonadal sheath and the interstitial cells of the gonad. In stage 16 embryos, expressed in the somatic and visceral muscles where localizes to sites of attachment between adjacent muscles. In third larval instar wing imaginal disk, expressed in the ventral compartment and in a subset of adepithelial and peripodial cells (at protein level).

It is found in the apical cell membrane. Its subcellular location is the lateral cell membrane. The protein resides in the basal cell membrane. Alpha-PS2/beta-PS is a receptor for Tig, wb and Ten-m. Involved in the function and/or development of the olfactory system. This is Integrin alpha-PS2 (if) from Drosophila melanogaster (Fruit fly).